The following is a 135-amino-acid chain: Large ribosomal subunit protein eL27z (135 aa).

This sequence belongs to the eukaryotic ribosomal protein eL27 family.

This is Large ribosomal subunit protein eL27z (RPL27A) from Arabidopsis thaliana (Mouse-ear cress).